Reading from the N-terminus, the 316-residue chain is Ribosomal RNA small subunit methyltransferase H (316 aa).

Residues 35 to 37 (GGH), aspartate 55, phenylalanine 79, aspartate 101, and glutamine 108 contribute to the S-adenosyl-L-methionine site. Residues 291–316 (AIKPSKDEVDENTRSRSSVLRIAEKL) are disordered. Over residues 294 to 304 (PSKDEVDENTR) the composition is skewed to basic and acidic residues.

It belongs to the methyltransferase superfamily. RsmH family.

It is found in the cytoplasm. It carries out the reaction cytidine(1402) in 16S rRNA + S-adenosyl-L-methionine = N(4)-methylcytidine(1402) in 16S rRNA + S-adenosyl-L-homocysteine + H(+). Its function is as follows. Specifically methylates the N4 position of cytidine in position 1402 (C1402) of 16S rRNA. This is Ribosomal RNA small subunit methyltransferase H from Vibrio atlanticus (strain LGP32) (Vibrio splendidus (strain Mel32)).